The chain runs to 277 residues: 4-hydroxy-tetrahydrodipicolinate reductase (277 aa).

NAD(+) is bound by residues 11-16 and 110-112; these read GALGRM and GTT. The active-site Proton donor/acceptor is the H166. H167 is a binding site for (S)-2,3,4,5-tetrahydrodipicolinate. K170 functions as the Proton donor in the catalytic mechanism. 176–177 provides a ligand contact to (S)-2,3,4,5-tetrahydrodipicolinate; sequence GT.

It belongs to the DapB family.

The protein resides in the cytoplasm. It carries out the reaction (S)-2,3,4,5-tetrahydrodipicolinate + NAD(+) + H2O = (2S,4S)-4-hydroxy-2,3,4,5-tetrahydrodipicolinate + NADH + H(+). It catalyses the reaction (S)-2,3,4,5-tetrahydrodipicolinate + NADP(+) + H2O = (2S,4S)-4-hydroxy-2,3,4,5-tetrahydrodipicolinate + NADPH + H(+). Its pathway is amino-acid biosynthesis; L-lysine biosynthesis via DAP pathway; (S)-tetrahydrodipicolinate from L-aspartate: step 4/4. Functionally, catalyzes the conversion of 4-hydroxy-tetrahydrodipicolinate (HTPA) to tetrahydrodipicolinate. The chain is 4-hydroxy-tetrahydrodipicolinate reductase from Synechococcus sp. (strain CC9902).